Consider the following 48-residue polypeptide: Putative ATP synthase protein 8-like protein (48 aa).

Residues 17–37 traverse the membrane as a helical segment; that stretch reads GFLVILLTLLLLSYAFLSMIL.

The protein belongs to the ATPase protein 8 family.

It is found in the membrane. The chain is Putative ATP synthase protein 8-like protein from Eremothecium gossypii (strain ATCC 10895 / CBS 109.51 / FGSC 9923 / NRRL Y-1056) (Yeast).